Reading from the N-terminus, the 189-residue chain is UPF0301 protein PP_4995 (189 aa).

This sequence belongs to the UPF0301 (AlgH) family.

This is UPF0301 protein PP_4995 from Pseudomonas putida (strain ATCC 47054 / DSM 6125 / CFBP 8728 / NCIMB 11950 / KT2440).